Reading from the N-terminus, the 266-residue chain is 4-hydroxy-tetrahydrodipicolinate reductase (266 aa).

10 to 15 (GPRGRM) lines the NAD(+) pocket. Residue lysine 38 coordinates NADP(+). NAD(+) contacts are provided by residues 99–101 (GTT) and 125–128 (APNF). Histidine 155 serves as the catalytic Proton donor/acceptor. A (S)-2,3,4,5-tetrahydrodipicolinate-binding site is contributed by histidine 156. Lysine 159 functions as the Proton donor in the catalytic mechanism. (S)-2,3,4,5-tetrahydrodipicolinate is bound at residue 165 to 166 (GT).

Belongs to the DapB family.

The protein resides in the cytoplasm. It catalyses the reaction (S)-2,3,4,5-tetrahydrodipicolinate + NAD(+) + H2O = (2S,4S)-4-hydroxy-2,3,4,5-tetrahydrodipicolinate + NADH + H(+). The catalysed reaction is (S)-2,3,4,5-tetrahydrodipicolinate + NADP(+) + H2O = (2S,4S)-4-hydroxy-2,3,4,5-tetrahydrodipicolinate + NADPH + H(+). The protein operates within amino-acid biosynthesis; L-lysine biosynthesis via DAP pathway; (S)-tetrahydrodipicolinate from L-aspartate: step 4/4. In terms of biological role, catalyzes the conversion of 4-hydroxy-tetrahydrodipicolinate (HTPA) to tetrahydrodipicolinate. This chain is 4-hydroxy-tetrahydrodipicolinate reductase, found in Bacillus cereus (strain ZK / E33L).